The following is a 355-amino-acid chain: Protein RecA (355 aa).

Position 72-79 (72-79 (GPESSGKT)) interacts with ATP.

This sequence belongs to the RecA family.

The protein resides in the cytoplasm. Its function is as follows. Can catalyze the hydrolysis of ATP in the presence of single-stranded DNA, the ATP-dependent uptake of single-stranded DNA by duplex DNA, and the ATP-dependent hybridization of homologous single-stranded DNAs. It interacts with LexA causing its activation and leading to its autocatalytic cleavage. The protein is Protein RecA of Wolbachia sp. subsp. Drosophila simulans (strain wRi).